The following is a 357-amino-acid chain: MKLKKFLVLLLIPFLYACSSDRSGNYDDAFAKDTNGLDLLTGQFSQNIDQIWGVNELLVASRKDYVKYTDSYYTRSHISFEEGQITIETLADANRLHSAIVHTLLMGSDAKGIDLFASGDVPISSRPFLVGQVVDNFGRQINNIDVANSFASYLLQNRLQSRRLSNGRTVQFVSIQMIANHVNVRARKYLSLVRQASRRYGIDESLILGIMQTESSFNPYAISYANAMGLMQVVPHTAGRDIFKLKGRSGQPSKSYLFDPANNIDAGVSYLWILKNEYLAGITNPTSMRYAMISAYNSGAGAVLRVFDSDQEYAINIINRMQPEQVYRILTTVHPSSQARNYLLKVDKAQRSYRRAR.

The signal sequence occupies residues 1 to 17; it reads MKLKKFLVLLLIPFLYA. Residue cysteine 18 is the site of N-palmitoyl cysteine attachment. Cysteine 18 carries S-diacylglycerol cysteine lipidation.

It belongs to the transglycosylase Slt family.

It is found in the cell outer membrane. The catalysed reaction is Exolytic cleavage of the (1-&gt;4)-beta-glycosidic linkage between N-acetylmuramic acid (MurNAc) and N-acetylglucosamine (GlcNAc) residues in peptidoglycan, from either the reducing or the non-reducing ends of the peptidoglycan chains, with concomitant formation of a 1,6-anhydrobond in the MurNAc residue.. Murein-degrading enzyme. May play a role in recycling of muropeptides during cell elongation and/or cell division. The polypeptide is Membrane-bound lytic murein transglycosylase C (Mannheimia succiniciproducens (strain KCTC 0769BP / MBEL55E)).